Reading from the N-terminus, the 231-residue chain is Ion-translocating oxidoreductase complex subunit E (231 aa).

6 consecutive transmembrane segments (helical) span residues 18 to 38 (ALVQ…ATNA), 39 to 59 (LGLG…ISTL), 63 to 83 (TPAE…VSAV), 86 to 106 (LINA…PLIV), 125 to 145 (ALSA…MFVL), and 182 to 202 (PFLL…MLAG).

It belongs to the NqrDE/RnfAE family. In terms of assembly, the complex is composed of six subunits: RsxA, RsxB, RsxC, RsxD, RsxE and RsxG.

It localises to the cell inner membrane. Its function is as follows. Part of a membrane-bound complex that couples electron transfer with translocation of ions across the membrane. Required to maintain the reduced state of SoxR. This is Ion-translocating oxidoreductase complex subunit E from Escherichia coli O6:H1 (strain CFT073 / ATCC 700928 / UPEC).